Reading from the N-terminus, the 343-residue chain is Fructose-1,6-bisphosphatase class 1 (343 aa).

Mg(2+) contacts are provided by Glu91, Asp113, Ile115, and Asp116. Substrate contacts are provided by residues 116–119 (DGSS), Asn210, and Lys276. Glu282 serves as a coordination point for Mg(2+).

Belongs to the FBPase class 1 family. As to quaternary structure, homotetramer. It depends on Mg(2+) as a cofactor.

The protein localises to the cytoplasm. The enzyme catalyses beta-D-fructose 1,6-bisphosphate + H2O = beta-D-fructose 6-phosphate + phosphate. It functions in the pathway carbohydrate biosynthesis; gluconeogenesis. This chain is Fructose-1,6-bisphosphatase class 1, found in Parvibaculum lavamentivorans (strain DS-1 / DSM 13023 / NCIMB 13966).